Reading from the N-terminus, the 447-residue chain is Phosphoglucosamine mutase (447 aa).

Catalysis depends on S102, which acts as the Phosphoserine intermediate. Mg(2+) is bound by residues S102, D241, D243, and D245. S102 is subject to Phosphoserine.

The protein belongs to the phosphohexose mutase family. Requires Mg(2+) as cofactor. Activated by phosphorylation.

The enzyme catalyses alpha-D-glucosamine 1-phosphate = D-glucosamine 6-phosphate. Its function is as follows. Catalyzes the conversion of glucosamine-6-phosphate to glucosamine-1-phosphate. The chain is Phosphoglucosamine mutase from Delftia acidovorans (strain DSM 14801 / SPH-1).